We begin with the raw amino-acid sequence, 145 residues long: SsrA-binding protein (145 aa).

This sequence belongs to the SmpB family.

The protein localises to the cytoplasm. Functionally, required for rescue of stalled ribosomes mediated by trans-translation. Binds to transfer-messenger RNA (tmRNA), required for stable association of tmRNA with ribosomes. tmRNA and SmpB together mimic tRNA shape, replacing the anticodon stem-loop with SmpB. tmRNA is encoded by the ssrA gene; the 2 termini fold to resemble tRNA(Ala) and it encodes a 'tag peptide', a short internal open reading frame. During trans-translation Ala-aminoacylated tmRNA acts like a tRNA, entering the A-site of stalled ribosomes, displacing the stalled mRNA. The ribosome then switches to translate the ORF on the tmRNA; the nascent peptide is terminated with the 'tag peptide' encoded by the tmRNA and targeted for degradation. The ribosome is freed to recommence translation, which seems to be the essential function of trans-translation. This Mycoplasmopsis pulmonis (strain UAB CTIP) (Mycoplasma pulmonis) protein is SsrA-binding protein.